The primary structure comprises 383 residues: Dimethylsulfoniopropionate lyase 3 (383 aa).

It belongs to the aspartate/glutamate racemases family. ALMA1 subfamily. As to quaternary structure, homotetramer.

It catalyses the reaction S,S-dimethyl-beta-propiothetin = acrylate + dimethyl sulfide + H(+). Its function is as follows. Mediates cleavage of dimethylsulfoniopropionate (DMSP) into dimethyl sulfide (DMS) and acrylate. DMS is the principal form by which sulfur is transported from oceans to the atmosphere and is a key component of the ocean sulfur cycle. This chain is Dimethylsulfoniopropionate lyase 3, found in Emiliania huxleyi (strain CCMP1516).